Reading from the N-terminus, the 78-residue chain is Large ribosomal subunit protein uL29 (78 aa).

It belongs to the universal ribosomal protein uL29 family.

The protein is Large ribosomal subunit protein uL29 of Crocosphaera subtropica (strain ATCC 51142 / BH68) (Cyanothece sp. (strain ATCC 51142)).